Reading from the N-terminus, the 383-residue chain is Lipid-A-disaccharide synthase (383 aa).

It belongs to the LpxB family.

The enzyme catalyses a lipid X + a UDP-2-N,3-O-bis[(3R)-3-hydroxyacyl]-alpha-D-glucosamine = a lipid A disaccharide + UDP + H(+). Its pathway is bacterial outer membrane biogenesis; LPS lipid A biosynthesis. Functionally, condensation of UDP-2,3-diacylglucosamine and 2,3-diacylglucosamine-1-phosphate to form lipid A disaccharide, a precursor of lipid A, a phosphorylated glycolipid that anchors the lipopolysaccharide to the outer membrane of the cell. This chain is Lipid-A-disaccharide synthase, found in Alcanivorax borkumensis (strain ATCC 700651 / DSM 11573 / NCIMB 13689 / SK2).